We begin with the raw amino-acid sequence, 82 residues long: Cytochrome b559 subunit alpha (82 aa).

The helical transmembrane segment at 22 to 36 threads the bilayer; that stretch reads IIHAVALPAIFVAGF. Residue His24 coordinates heme.

Belongs to the PsbE/PsbF family. Heterodimer of an alpha subunit and a beta subunit. PSII is composed of 1 copy each of membrane proteins PsbA, PsbB, PsbC, PsbD, PsbE, PsbF, PsbH, PsbI, PsbJ, PsbK, PsbL, PsbM, PsbT, PsbX, PsbY, Psb30/Ycf12, peripheral proteins PsbO, CyanoQ (PsbQ), PsbU, PsbV and a large number of cofactors. It forms dimeric complexes. Heme b is required as a cofactor.

Its subcellular location is the cellular thylakoid membrane. Its function is as follows. This b-type cytochrome is tightly associated with the reaction center of photosystem II (PSII). PSII is a light-driven water:plastoquinone oxidoreductase that uses light energy to abstract electrons from H(2)O, generating O(2) and a proton gradient subsequently used for ATP formation. It consists of a core antenna complex that captures photons, and an electron transfer chain that converts photonic excitation into a charge separation. The protein is Cytochrome b559 subunit alpha of Prochlorococcus marinus (strain NATL1A).